A 317-amino-acid chain; its full sequence is Beta-ketoacyl-[acyl-carrier-protein] synthase III (317 aa).

Active-site residues include cysteine 112 and histidine 244. The ACP-binding stretch occupies residues 245–249 (QANLR). Asparagine 274 is a catalytic residue.

This sequence belongs to the thiolase-like superfamily. FabH family. Homodimer.

The protein resides in the cytoplasm. It carries out the reaction malonyl-[ACP] + acetyl-CoA + H(+) = 3-oxobutanoyl-[ACP] + CO2 + CoA. It participates in lipid metabolism; fatty acid biosynthesis. Functionally, catalyzes the condensation reaction of fatty acid synthesis by the addition to an acyl acceptor of two carbons from malonyl-ACP. Catalyzes the first condensation reaction which initiates fatty acid synthesis and may therefore play a role in governing the total rate of fatty acid production. Possesses both acetoacetyl-ACP synthase and acetyl transacylase activities. Its substrate specificity determines the biosynthesis of branched-chain and/or straight-chain of fatty acids. The chain is Beta-ketoacyl-[acyl-carrier-protein] synthase III from Salmonella typhi.